Consider the following 230-residue polypeptide: Proteasome subunit beta 2 (230 aa).

Over residues 1 to 10 the composition is skewed to basic and acidic residues; it reads MHDPENRLTD. The segment at 1–29 is disordered; the sequence is MHDPENRLTDAYEPEVGNLPNEDSGRDEE. A propeptide spans 1 to 35 (removed in mature form; by autocatalysis); that stretch reads MHDPENRLTDAYEPEVGNLPNEDSGRDEENVVKTG. Threonine 36 (nucleophile) is an active-site residue.

Belongs to the peptidase T1B family. In terms of assembly, the 20S proteasome core is composed of 14 alpha and 14 beta subunits that assemble into four stacked heptameric rings, resulting in a barrel-shaped structure. The two inner rings, each composed of seven catalytic beta subunits, are sandwiched by two outer rings, each composed of seven alpha subunits. The catalytic chamber with the active sites is on the inside of the barrel. Has a gated structure, the ends of the cylinder being occluded by the N-termini of the alpha-subunits. Is capped at one or both ends by the proteasome regulatory ATPase, PAN.

Its subcellular location is the cytoplasm. It carries out the reaction Cleavage of peptide bonds with very broad specificity.. With respect to regulation, the formation of the proteasomal ATPase PAN-20S proteasome complex, via the docking of the C-termini of PAN into the intersubunit pockets in the alpha-rings, triggers opening of the gate for substrate entry. Interconversion between the open-gate and close-gate conformations leads to a dynamic regulation of the 20S proteasome proteolysis activity. In terms of biological role, component of the proteasome core, a large protease complex with broad specificity involved in protein degradation. This Haloarcula marismortui (strain ATCC 43049 / DSM 3752 / JCM 8966 / VKM B-1809) (Halobacterium marismortui) protein is Proteasome subunit beta 2.